Consider the following 244-residue polypeptide: Claudin-12 (244 aa).

Topologically, residues 1–10 are cytoplasmic; that stretch reads MGCRDVHAAT. The helical transmembrane segment at 11–31 threads the bilayer; that stretch reads VLSFLCGIASVAGLFAGTLLP. Residues 32-87 are Extracellular-facing; the sequence is NWRKLRLITFNRNEKNLTIYTGLWVKCARYDGSSDCLMYDRTWYLSVDQLDLRVLQ. Residues 88–108 form a helical membrane-spanning segment; that stretch reads FALPLSIVIAMGALLLCLIGM. Residues 109 to 135 are Cytoplasmic-facing; it reads CNTAFNSSVPNIKLAKCLVNSAGCHLV. The chain crosses the membrane as a helical span at residues 136–156; that stretch reads AGLLFFLAGTVSLSPSIWAIF. Residues 157-174 lie on the Extracellular side of the membrane; the sequence is YNSHLNRKFEPVFTFDYA. The chain crosses the membrane as a helical span at residues 175–195; sequence VFVTIASSGGLFMTALLLFVW. The Cytoplasmic segment spans residues 196–244; the sequence is YCACKSLSSPFWQPLYSHAPGMHTYSQPYSSRSRLSAIEIDIPVVSHST. Residues Ser-228 and Ser-231 each carry the phosphoserine modification.

It belongs to the claudin family. As to quaternary structure, interacts with OCLN.

Its subcellular location is the cell junction. It is found in the tight junction. The protein resides in the cell membrane. In terms of biological role, plays a major role in tight junction-specific obliteration of the intercellular space, through calcium-independent cell-adhesion activity. The polypeptide is Claudin-12 (Cldn12) (Mus musculus (Mouse)).